The sequence spans 529 residues: Bifunctional purine biosynthesis protein PurH (529 aa).

The MGS-like domain occupies 1–148 (MQQRRPVRRA…KNHKDVAIVV (148 aa)).

The protein belongs to the PurH family.

The catalysed reaction is (6R)-10-formyltetrahydrofolate + 5-amino-1-(5-phospho-beta-D-ribosyl)imidazole-4-carboxamide = 5-formamido-1-(5-phospho-D-ribosyl)imidazole-4-carboxamide + (6S)-5,6,7,8-tetrahydrofolate. The enzyme catalyses IMP + H2O = 5-formamido-1-(5-phospho-D-ribosyl)imidazole-4-carboxamide. It functions in the pathway purine metabolism; IMP biosynthesis via de novo pathway; 5-formamido-1-(5-phospho-D-ribosyl)imidazole-4-carboxamide from 5-amino-1-(5-phospho-D-ribosyl)imidazole-4-carboxamide (10-formyl THF route): step 1/1. It participates in purine metabolism; IMP biosynthesis via de novo pathway; IMP from 5-formamido-1-(5-phospho-D-ribosyl)imidazole-4-carboxamide: step 1/1. This is Bifunctional purine biosynthesis protein PurH from Salmonella schwarzengrund (strain CVM19633).